The primary structure comprises 82 residues: Penaeidin-3d (82 aa).

The first 19 residues, 1-19 (MRLVVCLVFLASFALVCQG), serve as a signal peptide directing secretion. Q20 is modified (pyrrolidone carboxylic acid). Cystine bridges form between C51–C66, C55–C73, and C67–C74. The residue at position 81 (S81) is a Serine amide.

Belongs to the penaeidin family.

The protein resides in the cytoplasmic granule. Antibacterial and antifungal activity. Presents chitin-binding activity. This is Penaeidin-3d from Penaeus vannamei (Whiteleg shrimp).